Reading from the N-terminus, the 353-residue chain is Photosystem II protein D1 (353 aa).

Thr2 bears the N-acetylthreonine mark. Thr2 is modified (phosphothreonine). 3 consecutive transmembrane segments (helical) span residues 29–46 (YIGW…TATS), 118–133 (HFLL…EWEL), and 142–156 (WIAV…AATA). His118 is a binding site for chlorophyll a. Tyr126 provides a ligand contact to pheophytin a. [CaMn4O5] cluster is bound by residues Asp170 and Glu189. The helical transmembrane segment at 197 to 218 (FHMLGVAGVFGGSLFSAMHGSL) threads the bilayer. His198 contacts chlorophyll a. Residues His215 and 264–265 (SF) each bind a quinone. Residue His215 participates in Fe cation binding. His272 contacts Fe cation. The helical transmembrane segment at 274 to 288 (FLAAWPVVGIWFTAL) threads the bilayer. [CaMn4O5] cluster-binding residues include His332, Glu333, Asp342, and Ala344. The propeptide occupies 345-353 (AIEAPSTNG).

The protein belongs to the reaction center PufL/M/PsbA/D family. PSII is composed of 1 copy each of membrane proteins PsbA, PsbB, PsbC, PsbD, PsbE, PsbF, PsbH, PsbI, PsbJ, PsbK, PsbL, PsbM, PsbT, PsbX, PsbY, PsbZ, Psb30/Ycf12, at least 3 peripheral proteins of the oxygen-evolving complex and a large number of cofactors. It forms dimeric complexes. The D1/D2 heterodimer binds P680, chlorophylls that are the primary electron donor of PSII, and subsequent electron acceptors. It shares a non-heme iron and each subunit binds pheophytin, quinone, additional chlorophylls, carotenoids and lipids. D1 provides most of the ligands for the Mn4-Ca-O5 cluster of the oxygen-evolving complex (OEC). There is also a Cl(-1) ion associated with D1 and D2, which is required for oxygen evolution. The PSII complex binds additional chlorophylls, carotenoids and specific lipids. is required as a cofactor. Post-translationally, tyr-161 forms a radical intermediate that is referred to as redox-active TyrZ, YZ or Y-Z. C-terminally processed by CTPA; processing is essential to allow assembly of the oxygen-evolving complex and thus photosynthetic growth.

The protein resides in the plastid. It is found in the chloroplast thylakoid membrane. It catalyses the reaction 2 a plastoquinone + 4 hnu + 2 H2O = 2 a plastoquinol + O2. In terms of biological role, photosystem II (PSII) is a light-driven water:plastoquinone oxidoreductase that uses light energy to abstract electrons from H(2)O, generating O(2) and a proton gradient subsequently used for ATP formation. It consists of a core antenna complex that captures photons, and an electron transfer chain that converts photonic excitation into a charge separation. The D1/D2 (PsbA/PsbD) reaction center heterodimer binds P680, the primary electron donor of PSII as well as several subsequent electron acceptors. The chain is Photosystem II protein D1 from Petunia hybrida (Petunia).